Consider the following 236-residue polypeptide: Leucyl/phenylalanyl-tRNA--protein transferase (236 aa).

The protein belongs to the L/F-transferase family.

Its subcellular location is the cytoplasm. It carries out the reaction N-terminal L-lysyl-[protein] + L-leucyl-tRNA(Leu) = N-terminal L-leucyl-L-lysyl-[protein] + tRNA(Leu) + H(+). The enzyme catalyses N-terminal L-arginyl-[protein] + L-leucyl-tRNA(Leu) = N-terminal L-leucyl-L-arginyl-[protein] + tRNA(Leu) + H(+). The catalysed reaction is L-phenylalanyl-tRNA(Phe) + an N-terminal L-alpha-aminoacyl-[protein] = an N-terminal L-phenylalanyl-L-alpha-aminoacyl-[protein] + tRNA(Phe). Functions in the N-end rule pathway of protein degradation where it conjugates Leu, Phe and, less efficiently, Met from aminoacyl-tRNAs to the N-termini of proteins containing an N-terminal arginine or lysine. The chain is Leucyl/phenylalanyl-tRNA--protein transferase from Shewanella sp. (strain MR-7).